A 127-amino-acid chain; its full sequence is Fluoride-specific ion channel FluC (127 aa).

Helical transmembrane passes span 4–24 (LLLA…FLSM), 35–55 (LGTL…LAWF), 71–91 (TGFC…VFLL), and 103–123 (IAVN…LFSA). Residues glycine 75 and threonine 78 each coordinate Na(+).

It belongs to the fluoride channel Fluc/FEX (TC 1.A.43) family.

It is found in the cell inner membrane. It carries out the reaction fluoride(in) = fluoride(out). With respect to regulation, na(+) is not transported, but it plays an essential structural role and its presence is essential for fluoride channel function. Its function is as follows. Fluoride-specific ion channel. Important for reducing fluoride concentration in the cell, thus reducing its toxicity. In Enterobacter sp. (strain 638), this protein is Fluoride-specific ion channel FluC.